The primary structure comprises 28 residues: Caerulein precursor fragment B1 (28 aa).

The protein belongs to the gastrin/cholecystokinin family. Expressed by the skin glands.

Its subcellular location is the secreted. In terms of biological role, peptide CPF-B1: Has antimicrobial activity against Gram-negative bacteria E.coli ATCC 25922 (MIC=5 uM) and multidrug-resistant A.baumannii (MIC=4-8 uM), against Gram-positive bacteria S.aureus ATCC 25923 (MIC=5 uM) and methicillin-resistant S.aureus and against fungus C.albicans ATCC 90028 (MIC=25 uM). Has some hemolytic activity against human erythrocytes at high concentrations. This is Caerulein precursor fragment B1 from Xenopus borealis (Kenyan clawed frog).